We begin with the raw amino-acid sequence, 1068 residues long: Probable ATPase FE772_23070 (1068 aa).

ATP is bound at residue 217–224 (GGGGAGKT).

Its function is as follows. Involved in defense against bacteriophages. When this probable 4 gene operon (bGSDM-FE772_23060-FE772_23065-FE772_23070) is inserted into E.coli it provides nearly 100-fold protection against phages T5 and T6 and about 8-fold against phage T4. The operon without bGSDM no longer protects against phage. Probably a nucleotide hydrolase, possibly of ATP. This chain is Probable ATPase FE772_23070, found in Lysobacter enzymogenes.